The chain runs to 463 residues: Type IV secretion system protein PtlD homolog (463 aa).

The first 24 residues, 1–24, serve as a signal peptide directing secretion; the sequence is MAGLSRILLSCTLACLLAGQAAQA. Helical transmembrane passes span 118–138, 232–252, 253–273, 294–314, and 333–353; these read LQPL…YALL, WLLC…LAAS, LLIV…LFLV, ALVF…VLAG, and MLAA…VPLA. Residues 376–410 show a composition bias toward low complexity; sequence AHRQAAARQYAPRPAAAAAAAGPHQAGTYAASATP. The interval 376–463 is disordered; sequence AHRQAAARQY…RVLPRKPNLP (88 aa). Positions 411–420 are enriched in pro residues; sequence APAPARPAPS. Basic and acidic residues predominate over residues 441–455; the sequence is VRRDDRPAPAPDRRV.

The protein localises to the cell membrane. The protein is Type IV secretion system protein PtlD homolog (ptlD) of Bordetella parapertussis (strain 12822 / ATCC BAA-587 / NCTC 13253).